Reading from the N-terminus, the 95-residue chain is SCDFCHNIGKDCDGYEEECSSPEDVCGKNCFSSSICKELCEDQPEPGEPLSKDSTEYEAICKYEQFPGDISYNLKGCVSSCPLLSLSNATFEQNR.

Disulfide bonds link Cys2–Cys26, Cys5–Cys12, Cys19–Cys30, and Cys61–Cys77.

Forms dimers or higher order oligomers in a temperature-dependent manner in vitro. In terms of tissue distribution, expressed by the liver.

The protein localises to the secreted. Functionally, inhibits the enzymatic activity of basic and acidic PLA2 from B.jararacussu and B.pauloensis, respectively, in a dose-dependent manner. Also inhibits myotoxicity and cytotoxicity of BnSp-7 of B.pauloensis. This Crotalus durissus collilineatus (Brazilian rattlesnake) protein is Phospholipase A2 inhibitor gammaCdcPLI.